The primary structure comprises 321 residues: Aspartate carbamoyltransferase catalytic subunit (321 aa).

Carbamoyl phosphate contacts are provided by arginine 65 and threonine 66. Position 93 (lysine 93) interacts with L-aspartate. Positions 115, 143, and 146 each coordinate carbamoyl phosphate. Positions 176 and 230 each coordinate L-aspartate. 2 residues coordinate carbamoyl phosphate: glycine 271 and proline 272.

It belongs to the aspartate/ornithine carbamoyltransferase superfamily. ATCase family. Heterododecamer (2C3:3R2) of six catalytic PyrB chains organized as two trimers (C3), and six regulatory PyrI chains organized as three dimers (R2).

The catalysed reaction is carbamoyl phosphate + L-aspartate = N-carbamoyl-L-aspartate + phosphate + H(+). It functions in the pathway pyrimidine metabolism; UMP biosynthesis via de novo pathway; (S)-dihydroorotate from bicarbonate: step 2/3. Its function is as follows. Catalyzes the condensation of carbamoyl phosphate and aspartate to form carbamoyl aspartate and inorganic phosphate, the committed step in the de novo pyrimidine nucleotide biosynthesis pathway. The sequence is that of Aspartate carbamoyltransferase catalytic subunit from Bartonella tribocorum (strain CIP 105476 / IBS 506).